The sequence spans 299 residues: HTH-type transcriptional regulator ArgP (299 aa).

The HTH lysR-type domain maps to 2–58 (FDYKLLSALAAVIEQAGFERAAQVLGLSQSAISQRIKLLEARVGQPVLVRVTPPAPT). Residues 19-38 (FERAAQVLGLSQSAISQRIK) constitute a DNA-binding region (H-T-H motif).

The protein belongs to the LysR transcriptional regulatory family. In terms of assembly, homodimer.

Controls the transcription of genes involved in arginine and lysine metabolism. This is HTH-type transcriptional regulator ArgP from Pseudomonas fluorescens (strain ATCC BAA-477 / NRRL B-23932 / Pf-5).